Consider the following 346-residue polypeptide: Dihydroorotase (346 aa).

His-17 and His-19 together coordinate Zn(2+). Residues 19 to 21 (HLR) and Asn-45 each bind substrate. Zn(2+)-binding residues include Lys-103, His-140, and His-178. Position 103 is an N6-carboxylysine (Lys-103). His-140 is a substrate binding site. Residue Leu-223 participates in substrate binding. Asp-251 contributes to the Zn(2+) binding site. Asp-251 is a catalytic residue. Positions 255 and 267 each coordinate substrate.

It belongs to the metallo-dependent hydrolases superfamily. DHOase family. Class II DHOase subfamily. Homodimer. The cofactor is Zn(2+).

The enzyme catalyses (S)-dihydroorotate + H2O = N-carbamoyl-L-aspartate + H(+). The protein operates within pyrimidine metabolism; UMP biosynthesis via de novo pathway; (S)-dihydroorotate from bicarbonate: step 3/3. Catalyzes the reversible cyclization of carbamoyl aspartate to dihydroorotate. This Synechococcus sp. (strain RCC307) protein is Dihydroorotase.